Reading from the N-terminus, the 198-residue chain is NADH-quinone oxidoreductase subunit B (198 aa).

Residues Cys62, Cys63, Cys128, and Cys158 each coordinate [4Fe-4S] cluster.

The protein belongs to the complex I 20 kDa subunit family. In terms of assembly, NDH-1 is composed of 14 different subunits. Subunits NuoB, C, D, E, F, and G constitute the peripheral sector of the complex. [4Fe-4S] cluster serves as cofactor.

The protein localises to the cell inner membrane. The catalysed reaction is a quinone + NADH + 5 H(+)(in) = a quinol + NAD(+) + 4 H(+)(out). NDH-1 shuttles electrons from NADH, via FMN and iron-sulfur (Fe-S) centers, to quinones in the respiratory chain. The immediate electron acceptor for the enzyme in this species is believed to be a menaquinone. Couples the redox reaction to proton translocation (for every two electrons transferred, four hydrogen ions are translocated across the cytoplasmic membrane), and thus conserves the redox energy in a proton gradient. The polypeptide is NADH-quinone oxidoreductase subunit B (Phocaeicola vulgatus (strain ATCC 8482 / DSM 1447 / JCM 5826 / CCUG 4940 / NBRC 14291 / NCTC 11154) (Bacteroides vulgatus)).